A 214-amino-acid chain; its full sequence is Phosphatidylserine decarboxylase proenzyme (214 aa).

Serine 182 acts as the Schiff-base intermediate with substrate; via pyruvic acid in catalysis. A Pyruvic acid (Ser); by autocatalysis modification is found at serine 182.

This sequence belongs to the phosphatidylserine decarboxylase family. PSD-A subfamily. Heterodimer of a large membrane-associated beta subunit and a small pyruvoyl-containing alpha subunit. The cofactor is pyruvate. Post-translationally, is synthesized initially as an inactive proenzyme. Formation of the active enzyme involves a self-maturation process in which the active site pyruvoyl group is generated from an internal serine residue via an autocatalytic post-translational modification. Two non-identical subunits are generated from the proenzyme in this reaction, and the pyruvate is formed at the N-terminus of the alpha chain, which is derived from the carboxyl end of the proenzyme. The post-translation cleavage follows an unusual pathway, termed non-hydrolytic serinolysis, in which the side chain hydroxyl group of the serine supplies its oxygen atom to form the C-terminus of the beta chain, while the remainder of the serine residue undergoes an oxidative deamination to produce ammonia and the pyruvoyl prosthetic group on the alpha chain.

Its subcellular location is the cell membrane. The enzyme catalyses a 1,2-diacyl-sn-glycero-3-phospho-L-serine + H(+) = a 1,2-diacyl-sn-glycero-3-phosphoethanolamine + CO2. The protein operates within phospholipid metabolism; phosphatidylethanolamine biosynthesis; phosphatidylethanolamine from CDP-diacylglycerol: step 2/2. In terms of biological role, catalyzes the formation of phosphatidylethanolamine (PtdEtn) from phosphatidylserine (PtdSer). The protein is Phosphatidylserine decarboxylase proenzyme of Burkholderia lata (strain ATCC 17760 / DSM 23089 / LMG 22485 / NCIMB 9086 / R18194 / 383).